The following is a 344-amino-acid chain: MSPSVLEPQSVPTLVNVGLKAVGRNDAPVERDARGLSKPLLELMPTLGTDAFTFSPIRESTVSRAMTRRYFADLDAHAETDIVIVGAGSCGLSAAYVLSTLRPDLRITIVEAGVAPGGGAWLGGQLFSAMVMRKPADVFLDEVGVPYEDEGDYVVVKHAALFTSTVLSKVLQRPNVKLFNATTVEDLITRKHHAESSSSSDDGEAEDEAKVRIAGVVTNWTLVSMHHDDQSCMDPNTINAPVIISTTGHDGPFGAFSVKRLVSMKQMERLNGMRGLDMQSAEDAIVNNTREIVPGLIVGGMELSEIDGANRMGPTFGAMALSGVKAAHEAIRVFDLRKAQNDKC.

Residues Cys-90, Glu-111–Ala-112, Gly-119, and Val-184 contribute to the substrate site. Cys-232 carries the post-translational modification 2,3-didehydroalanine (Cys). Substrate is bound by residues Asp-234, His-249, Met-301, and Arg-311–Gly-313.

This sequence belongs to the THI4 family. As to quaternary structure, homooctamer. Interacts with cyp-41. It depends on Fe cation as a cofactor. During the catalytic reaction, a sulfide is transferred from Cys-232 to a reaction intermediate, generating a dehydroalanine residue.

The protein localises to the cytoplasm. Its subcellular location is the nucleus. It carries out the reaction [ADP-thiazole synthase]-L-cysteine + glycine + NAD(+) = [ADP-thiazole synthase]-dehydroalanine + ADP-5-ethyl-4-methylthiazole-2-carboxylate + nicotinamide + 3 H2O + 2 H(+). In terms of biological role, involved in biosynthesis of the thiamine precursor thiazole. Catalyzes the conversion of NAD and glycine to adenosine diphosphate 5-(2-hydroxyethyl)-4-methylthiazole-2-carboxylic acid (ADT), an adenylated thiazole intermediate. The reaction includes an iron-dependent sulfide transfer from a conserved cysteine residue of the protein to a thiazole intermediate. The enzyme can only undergo a single turnover, which suggests it is a suicide enzyme. May have additional roles in adaptation to various stress conditions and in DNA damage tolerance. The chain is Thiamine thiazole synthase from Neurospora crassa (strain ATCC 24698 / 74-OR23-1A / CBS 708.71 / DSM 1257 / FGSC 987).